We begin with the raw amino-acid sequence, 539 residues long: GMP synthase [glutamine-hydrolyzing] (539 aa).

The Glutamine amidotransferase type-1 domain maps to 4-202; sequence KILILDFGSQ…VLQIAGAKPD (199 aa). Cys-81 (nucleophile) is an active-site residue. Residues His-176 and Glu-178 contribute to the active site. Residues 203-395 form the GMPS ATP-PPase domain; that stretch reads WIMSNHIEEA…LGLPPEMVYR (193 aa). An ATP-binding site is contributed by 230-236; it reads SGGVDSS.

As to quaternary structure, homodimer.

It carries out the reaction XMP + L-glutamine + ATP + H2O = GMP + L-glutamate + AMP + diphosphate + 2 H(+). It functions in the pathway purine metabolism; GMP biosynthesis; GMP from XMP (L-Gln route): step 1/1. Its function is as follows. Catalyzes the synthesis of GMP from XMP. The chain is GMP synthase [glutamine-hydrolyzing] from Burkholderia ambifaria (strain MC40-6).